The following is a 532-amino-acid chain: MAKRVAIVGAGVSGLASIKCCLEEGLEPTCFERSDDLGGLWRFTEHVEEGRASLYKSVVSNSCKEMSCYSDFPFPEDYPNYVPNSQFLEYLKMYANHFDLLKHIQFKTKVCSVTKCSDSAVSGQWEVVTMHEEKQESAIFDAVMVCTGFLTNPYLPLDSFPGINAFKGQYFHSRQYKHPDIFKDKRVLVIGMGNSGTDIAVEASHLAEKVFLSTTGGGWVISRIFDSGYPWDMVFMTRFQNMLRNSLPTPIVTWLMERKINNWLNHANYGLIPEDRTQLKEFVLNDELPGRIITGKVFIRPSIKEVKENSVIFNNTSKEEPIDIIVFATGYTFAFPFLDESVVKVEDGQASLYKYIFPAHLQKPTLAIIGLIKPLGSMIPTGETQARWAVRVLKGVNKLPPPSVMIEEINARKENKPSWFGLCYCKALQSDYITYIDELLTYINAKPNLFSMLLTDPHLALTVFFGPCSPYQFRLTGPGKWEGARNAIMTQWDRTFKVIKARVVQESPSPFESFLKVFSFLALLVAIFLIFL.

An N-acetylalanine modification is found at alanine 2. Topologically, residues 2–510 (AKRVAIVGAG…ARVVQESPSP (509 aa)) are lumenal. Residues 9-13 (GAGVS), glutamate 32, 40-41 (LW), and 61-62 (NS) each bind FAD. NADP(+) contacts are provided by residues 60–61 (SN) and 195–198 (SGTD). A helical membrane pass occupies residues 511 to 531 (FESFLKVFSFLALLVAIFLIF). Position 532 (leucine 532) is a topological domain, cytoplasmic.

It belongs to the FMO family. FAD serves as cofactor. As to expression, expressed mainly in fetal and adult liver.

Its subcellular location is the endoplasmic reticulum membrane. The catalysed reaction is hypotaurine + NADPH + O2 + H(+) = taurine + NADP(+) + H2O. The enzyme catalyses hypotaurine + NADH + O2 + H(+) = taurine + NAD(+) + H2O. It catalyses the reaction trimethylamine + NADPH + O2 = trimethylamine N-oxide + NADP(+) + H2O. It carries out the reaction N,N-dimethylaniline + NADPH + O2 + H(+) = N,N-dimethylaniline N-oxide + NADP(+) + H2O. Functionally, broad spectrum monooxygenase that catalyzes the oxygenation of a wide variety of nitrogen- and sulfur-containing compounds including xenobiotics. Catalyzes the S-oxygenation of hypotaurine to produce taurine, an organic osmolyte involved in cell volume regulation as well as a variety of cytoprotective and developmental processes. In vitro, catalyzes the N-oxygenation of trimethylamine (TMA) to produce trimethylamine N-oxide (TMAO) and could therefore participate to the detoxification of this compound that is generated by the action of gut microbiota from dietary precursors such as choline, choline containing compounds, betaine or L-carnitine. The chain is Flavin-containing monooxygenase 1 from Homo sapiens (Human).